A 97-amino-acid polypeptide reads, in one-letter code: Small ribosomal subunit protein bS20c (97 aa).

The span at 1 to 15 (MSKNVSAIKKNQVSL) shows a compositional bias: polar residues. The tract at residues 1 to 20 (MSKNVSAIKKNQVSLRNKRK) is disordered.

The protein belongs to the bacterial ribosomal protein bS20 family.

It is found in the plastid. Its subcellular location is the chloroplast. Binds directly to 16S ribosomal RNA. This Gracilaria tenuistipitata var. liui (Red alga) protein is Small ribosomal subunit protein bS20c.